A 457-amino-acid chain; its full sequence is Putative zinc finger CCCH domain-containing protein 21 (457 aa).

Disordered regions lie at residues 51–73 (PTSS…ARAS), 102–130 (LESP…EKLL), 195–221 (TSPS…ERER), and 280–329 (RKQA…RLRV). The segment covering 57–66 (DGGGGGGGGY) has biased composition (gly residues). Residues 215-276 (ASAEREREVR…HLSLLLEELE (62 aa)) are a coiled coil. C3H1-type zinc fingers lie at residues 382–409 (AAKT…HGLQ) and 419–447 (RYKT…HSPL).

The protein is Putative zinc finger CCCH domain-containing protein 21 of Oryza sativa subsp. japonica (Rice).